We begin with the raw amino-acid sequence, 283 residues long: NAD kinase (283 aa).

D65 (proton acceptor) is an active-site residue. Residues 65–66 (DG), 139–140 (ND), R150, R167, D169, 180–185 (TGYSVS), and Q239 contribute to the NAD(+) site.

The protein belongs to the NAD kinase family. A divalent metal cation serves as cofactor.

It localises to the cytoplasm. It catalyses the reaction NAD(+) + ATP = ADP + NADP(+) + H(+). Its function is as follows. Involved in the regulation of the intracellular balance of NAD and NADP, and is a key enzyme in the biosynthesis of NADP. Catalyzes specifically the phosphorylation on 2'-hydroxyl of the adenosine moiety of NAD to yield NADP. This Nitratidesulfovibrio vulgaris (strain DSM 19637 / Miyazaki F) (Desulfovibrio vulgaris) protein is NAD kinase.